Reading from the N-terminus, the 193-residue chain is Peptidyl-tRNA hydrolase (193 aa).

H17 provides a ligand contact to tRNA. H22 (proton acceptor) is an active-site residue. The tRNA site is built by F68, N70, and N116.

Belongs to the PTH family. As to quaternary structure, monomer.

The protein localises to the cytoplasm. The catalysed reaction is an N-acyl-L-alpha-aminoacyl-tRNA + H2O = an N-acyl-L-amino acid + a tRNA + H(+). Functionally, hydrolyzes ribosome-free peptidyl-tRNAs (with 1 or more amino acids incorporated), which drop off the ribosome during protein synthesis, or as a result of ribosome stalling. In terms of biological role, catalyzes the release of premature peptidyl moieties from peptidyl-tRNA molecules trapped in stalled 50S ribosomal subunits, and thus maintains levels of free tRNAs and 50S ribosomes. This Xanthomonas axonopodis pv. citri (strain 306) protein is Peptidyl-tRNA hydrolase.